Here is a 216-residue protein sequence, read N- to C-terminus: Adenylate kinase (216 aa).

10 to 15 (GAGKGT) contributes to the ATP binding site. Residues 30–59 (STGDIFRANIKEKTPLGIEAKRYIDNGQLV) form an NMP region. AMP-binding positions include threonine 31, arginine 36, 57–59 (QLV), 85–88 (GFPR), and glutamine 92. The segment at 126–163 (GRRVCTSCGASYHIRFNPPKIEGKCDICDNELIQRKDD) is LID. Residue arginine 127 coordinates ATP. Zn(2+)-binding residues include cysteine 130 and cysteine 133. 136–137 (SY) is a binding site for ATP. Zn(2+)-binding residues include cysteine 150 and cysteine 153. AMP contacts are provided by arginine 160 and arginine 171. Residue glutamate 199 participates in ATP binding.

Belongs to the adenylate kinase family. In terms of assembly, monomer.

Its subcellular location is the cytoplasm. It catalyses the reaction AMP + ATP = 2 ADP. Its pathway is purine metabolism; AMP biosynthesis via salvage pathway; AMP from ADP: step 1/1. Functionally, catalyzes the reversible transfer of the terminal phosphate group between ATP and AMP. Plays an important role in cellular energy homeostasis and in adenine nucleotide metabolism. This is Adenylate kinase from Clostridium botulinum (strain Langeland / NCTC 10281 / Type F).